The sequence spans 157 residues: 6,7-dimethyl-8-ribityllumazine synthase 1 (157 aa).

5-amino-6-(D-ribitylamino)uracil contacts are provided by residues Phe22, 53 to 55, and 82 to 84; these read ALE and TVI. Residue 87-88 coordinates (2S)-2-hydroxy-3-oxobutyl phosphate; it reads ET. The Proton donor role is filled by His90. Asn115 is a 5-amino-6-(D-ribitylamino)uracil binding site. Arg129 lines the (2S)-2-hydroxy-3-oxobutyl phosphate pocket.

The protein belongs to the DMRL synthase family.

It carries out the reaction (2S)-2-hydroxy-3-oxobutyl phosphate + 5-amino-6-(D-ribitylamino)uracil = 6,7-dimethyl-8-(1-D-ribityl)lumazine + phosphate + 2 H2O + H(+). Its pathway is cofactor biosynthesis; riboflavin biosynthesis; riboflavin from 2-hydroxy-3-oxobutyl phosphate and 5-amino-6-(D-ribitylamino)uracil: step 1/2. Catalyzes the formation of 6,7-dimethyl-8-ribityllumazine by condensation of 5-amino-6-(D-ribitylamino)uracil with 3,4-dihydroxy-2-butanone 4-phosphate. This is the penultimate step in the biosynthesis of riboflavin. This Brucella suis biovar 1 (strain 1330) protein is 6,7-dimethyl-8-ribityllumazine synthase 1.